Reading from the N-terminus, the 307-residue chain is Serine/threonine-protein phosphatase 4 catalytic subunit (307 aa).

A2 is modified (N-acetylalanine). Mn(2+)-binding residues include D54, H56, D82, and N114. H115 (proton donor) is an active-site residue. H164 and H238 together coordinate Mn(2+). L307 is subject to Leucine methyl ester.

It belongs to the PPP phosphatase family. PP-4 (PP-X) subfamily. In terms of assembly, serine/threonine-protein phosphatase 4 (PP4) occurs in different assemblies of the catalytic and one or more regulatory subunits. Component of the PP4 complexes PPP4C-PPP4R1, PPP4C-PPP4R2, PPP4C-PPP4R2-PPP4R3A, PPP4C-PPP4R2-PPP4R3B and PPP4C-PPP4R4. The PPP4C-PPP4R2 complex appears to be a tetramer composed of 2 molecules of PPP4C and 2 molecules of PPP4R2. Interacts with REL, NFKB1/p50 and RELA. Interacts with SMN1 and GEMIN4. Interacts with IRS4 (phosphorylated). Interacts with SMEK1/PPP4R3A; the interaction requires PP4R2. Interacts with HDAC3. Mn(2+) serves as cofactor. In terms of processing, methylation at the C-terminal Leu-307 is critical for interactions with regulatory subunits and functions in DNA repair.

It is found in the cytoplasm. It localises to the nucleus. The protein localises to the cytoskeleton. Its subcellular location is the microtubule organizing center. The protein resides in the centrosome. The catalysed reaction is O-phospho-L-seryl-[protein] + H2O = L-seryl-[protein] + phosphate. The enzyme catalyses O-phospho-L-threonyl-[protein] + H2O = L-threonyl-[protein] + phosphate. In terms of biological role, protein phosphatase that is involved in many processes such as microtubule organization at centrosomes, maturation of spliceosomal snRNPs, apoptosis, DNA repair, tumor necrosis factor (TNF)-alpha signaling, activation of c-Jun N-terminal kinase MAPK8, regulation of histone acetylation, DNA damage checkpoint signaling, NF-kappa-B activation and cell migration. The PPP4C-PPP4R1 PP4 complex may play a role in dephosphorylation and regulation of HDAC3. The PPP4C-PPP4R2-PPP4R3A PP4 complex specifically dephosphorylates H2AX phosphorylated on Ser-140 (gamma-H2AX) generated during DNA replication and required for DNA DSB repair. Dephosphorylates NDEL1 at CDK1 phosphorylation sites and negatively regulates CDK1 activity in interphase. In response to DNA damage, catalyzes RPA2 dephosphorylation, an essential step for DNA repair since it allows the efficient RPA2-mediated recruitment of RAD51 to chromatin. This is Serine/threonine-protein phosphatase 4 catalytic subunit (PPP4C) from Oryctolagus cuniculus (Rabbit).